A 309-amino-acid polypeptide reads, in one-letter code: Bombesin receptor-activated protein C6orf89 homolog (309 aa).

The Cytoplasmic segment spans residues 1-59 (MGSSLSEPCIYDKLSESIDILRQSGYRYGMSEREIEKFIKQVLETNEPRREPPQFPILR). A helical transmembrane segment spans residues 60–80 (ATVKFVVAVGVVLMAVLVFTY). Over 81-309 (PQSPVLMGSV…QDVQCDSAVL (229 aa)) the chain is Extracellular.

As to quaternary structure, homodimer.

It is found in the golgi apparatus membrane. The protein resides in the cytoplasm. Exhibits histone deacetylase (HDAC) enhancer properties. May play a role in progression through the cell cycle. In Danio rerio (Zebrafish), this protein is Bombesin receptor-activated protein C6orf89 homolog.